Reading from the N-terminus, the 289-residue chain is 4-diphosphocytidyl-2-C-methyl-D-erythritol kinase (289 aa).

Lysine 11 is an active-site residue. An ATP-binding site is contributed by 95-105; that stretch reads PMGGGIGGGSS. Aspartate 137 is an active-site residue.

The protein belongs to the GHMP kinase family. IspE subfamily.

It carries out the reaction 4-CDP-2-C-methyl-D-erythritol + ATP = 4-CDP-2-C-methyl-D-erythritol 2-phosphate + ADP + H(+). It participates in isoprenoid biosynthesis; isopentenyl diphosphate biosynthesis via DXP pathway; isopentenyl diphosphate from 1-deoxy-D-xylulose 5-phosphate: step 3/6. Catalyzes the phosphorylation of the position 2 hydroxy group of 4-diphosphocytidyl-2C-methyl-D-erythritol. This Aeromonas salmonicida (strain A449) protein is 4-diphosphocytidyl-2-C-methyl-D-erythritol kinase.